The primary structure comprises 101 residues: Thrombin-like enzyme okinaxobin-1 (101 aa).

An N-terminal signal peptide occupies residues 1–16 (LIRVLANLLILQLSYA). Positions 17–22 (QKSSEL) are excised as a propeptide. The Peptidase S1 domain maps to 23–101 (VIGGDECNIN…PKKKYFFRCR (79 aa)). C50 and C66 are disulfide-bonded. Residue H65 is the Charge relay system of the active site.

This sequence belongs to the peptidase S1 family. Snake venom subfamily. As to quaternary structure, monomer. In terms of processing, glycosylated. As to expression, expressed by the venom gland.

It localises to the secreted. With respect to regulation, strongly inactivated by diisopropylfluorophosphate (DFP) and phenylmethanesulfonyl fluoride (PMSF), and to a lesser extent by tosyl-L-lysine chloromethyl ketone (TLCK). Functionally, thrombin-like snake venom serine protease that releases specifically fibrinopeptide B from fibrinogen (FGB) to form fibrin clots. Shows a preferential cleavage at Arg-|-Gly bonds in fibrinogen beta chains. Cleaves fibrinogen beta chains preferentially to alpha chains. The polypeptide is Thrombin-like enzyme okinaxobin-1 (Ovophis okinavensis (Ryukyu Island pit viper)).